The primary structure comprises 241 residues: Small ribosomal subunit protein uS2 (241 aa).

This sequence belongs to the universal ribosomal protein uS2 family.

The protein is Small ribosomal subunit protein uS2 of Photorhabdus laumondii subsp. laumondii (strain DSM 15139 / CIP 105565 / TT01) (Photorhabdus luminescens subsp. laumondii).